Here is a 335-residue protein sequence, read N- to C-terminus: tRNA N6-adenosine threonylcarbamoyltransferase (335 aa).

Fe cation-binding residues include histidine 107 and histidine 111. Substrate-binding positions include 129–133 (LVSGG), aspartate 162, glycine 175, and asparagine 268. A Fe cation-binding site is contributed by aspartate 296.

This sequence belongs to the KAE1 / TsaD family. The cofactor is Fe(2+).

It is found in the cytoplasm. It carries out the reaction L-threonylcarbamoyladenylate + adenosine(37) in tRNA = N(6)-L-threonylcarbamoyladenosine(37) in tRNA + AMP + H(+). Functionally, required for the formation of a threonylcarbamoyl group on adenosine at position 37 (t(6)A37) in tRNAs that read codons beginning with adenine. Is involved in the transfer of the threonylcarbamoyl moiety of threonylcarbamoyl-AMP (TC-AMP) to the N6 group of A37, together with TsaE and TsaB. TsaD likely plays a direct catalytic role in this reaction. In Campylobacter fetus subsp. fetus (strain 82-40), this protein is tRNA N6-adenosine threonylcarbamoyltransferase.